The chain runs to 375 residues: PqqA peptide cyclase (375 aa).

A Radical SAM core domain is found at 18-235 (ILPPMAMLAE…EAREKYQGIL (218 aa)). Residues C32, C36, and C39 each contribute to the [4Fe-4S] cluster site.

The protein belongs to the radical SAM superfamily. PqqE family. Interacts with PqqD. The interaction is necessary for activity of PqqE. [4Fe-4S] cluster is required as a cofactor.

The enzyme catalyses [PQQ precursor protein] + S-adenosyl-L-methionine = E-Y cross-linked-[PQQ precursor protein] + 5'-deoxyadenosine + L-methionine + H(+). It participates in cofactor biosynthesis; pyrroloquinoline quinone biosynthesis. Functionally, catalyzes the cross-linking of a glutamate residue and a tyrosine residue in the PqqA protein as part of the biosynthesis of pyrroloquinoline quinone (PQQ). The sequence is that of PqqA peptide cyclase from Rhizobium meliloti (strain 1021) (Ensifer meliloti).